A 175-amino-acid chain; its full sequence is Ribosome maturation factor RimM (175 aa).

In terms of domain architecture, PRC barrel spans 98-175 (EGEYYWHQLE…EMRVDWDADF (78 aa)).

Belongs to the RimM family. Binds ribosomal protein uS19.

The protein localises to the cytoplasm. Functionally, an accessory protein needed during the final step in the assembly of 30S ribosomal subunit, possibly for assembly of the head region. Essential for efficient processing of 16S rRNA. May be needed both before and after RbfA during the maturation of 16S rRNA. It has affinity for free ribosomal 30S subunits but not for 70S ribosomes. The chain is Ribosome maturation factor RimM from Pseudomonas aeruginosa (strain ATCC 15692 / DSM 22644 / CIP 104116 / JCM 14847 / LMG 12228 / 1C / PRS 101 / PAO1).